The sequence spans 336 residues: Dihydroorotate dehydrogenase (quinone) (336 aa).

FMN contacts are provided by residues 62–66 (AGLDK) and T86. Position 66 (K66) interacts with substrate. Residue 111–115 (NRMGF) coordinates substrate. Positions 139 and 172 each coordinate FMN. N172 lines the substrate pocket. S175 functions as the Nucleophile in the catalytic mechanism. Residue N177 coordinates substrate. FMN contacts are provided by K217 and T245. 246 to 247 (NT) serves as a coordination point for substrate. Residues G268, G297, and 318-319 (YS) contribute to the FMN site.

This sequence belongs to the dihydroorotate dehydrogenase family. Type 2 subfamily. In terms of assembly, monomer. FMN is required as a cofactor.

It localises to the cell membrane. The catalysed reaction is (S)-dihydroorotate + a quinone = orotate + a quinol. Its pathway is pyrimidine metabolism; UMP biosynthesis via de novo pathway; orotate from (S)-dihydroorotate (quinone route): step 1/1. Functionally, catalyzes the conversion of dihydroorotate to orotate with quinone as electron acceptor. The chain is Dihydroorotate dehydrogenase (quinone) from Cronobacter sakazakii (strain ATCC BAA-894) (Enterobacter sakazakii).